Here is a 530-residue protein sequence, read N- to C-terminus: Glutamyl-tRNA reductase 2, chloroplastic (530 aa).

The transit peptide at 1–64 (MAVSSAFVVT…RCEISPSNKA (64 aa)) directs the protein to the chloroplast. Residues 134–137 (TCNR), S194, 199–201 (EGQ), and Q205 contribute to the substrate site. The Nucleophile role is filled by C135. 277 to 282 (GAGKMG) provides a ligand contact to NADP(+).

It belongs to the glutamyl-tRNA reductase family. Expressed in roots and flowers. Detected in leaves, hypocotyls and cotyledons.

The protein localises to the plastid. The protein resides in the chloroplast. The enzyme catalyses (S)-4-amino-5-oxopentanoate + tRNA(Glu) + NADP(+) = L-glutamyl-tRNA(Glu) + NADPH + H(+). It participates in porphyrin-containing compound metabolism; protoporphyrin-IX biosynthesis; 5-aminolevulinate from L-glutamyl-tRNA(Glu): step 1/2. The protein operates within porphyrin-containing compound metabolism; chlorophyll biosynthesis. Catalyzes the NADPH-dependent reduction of glutamyl-tRNA(Glu) to glutamate 1-semialdehyde (GSA). Probably involved in wound-induced supply of heme to defensive hemoproteins outside plastids. This is Glutamyl-tRNA reductase 2, chloroplastic (HEMA2) from Arabidopsis thaliana (Mouse-ear cress).